The following is a 352-amino-acid chain: Spermidine/putrescine import ATP-binding protein PotA (352 aa).

The 231-residue stretch at 7–237 folds into the ABC transporter domain; it reads IELKNVSKKY…PKNKFVANFI (231 aa). 39 to 46 contributes to the ATP binding site; it reads GPSGCGKT.

It belongs to the ABC transporter superfamily. Spermidine/putrescine importer (TC 3.A.1.11.1) family. The complex is composed of two ATP-binding proteins (PotA), two transmembrane proteins (PotB and PotC) and a solute-binding protein (PotD).

Its subcellular location is the cell membrane. The catalysed reaction is ATP + H2O + polyamine-[polyamine-binding protein]Side 1 = ADP + phosphate + polyamineSide 2 + [polyamine-binding protein]Side 1.. Its function is as follows. Part of the ABC transporter complex PotABCD involved in spermidine/putrescine import. Responsible for energy coupling to the transport system. In Clostridium acetobutylicum (strain ATCC 824 / DSM 792 / JCM 1419 / IAM 19013 / LMG 5710 / NBRC 13948 / NRRL B-527 / VKM B-1787 / 2291 / W), this protein is Spermidine/putrescine import ATP-binding protein PotA.